The sequence spans 433 residues: Steroid hormone receptor ERR2 (433 aa).

A disordered region spans residues 1 to 38 (MSSEDRHLGSSCGSFIKTEPSSPSSGIDALSHHSPSGS). An interaction with NANOG region spans residues 93–211 (YMLNAIPKRL…SPPAKKPLTK (119 aa)). Residues 100–186 (KRLCLVCGDI…RVRGGRQKYK (87 aa)) constitute a DNA-binding region (nuclear receptor). 2 NR C4-type zinc fingers span residues 103 to 123 (CLVC…CEAC) and 139 to 163 (CPAT…FMKC). Residues 203–433 (PPAKKPLTKI…LFLEMLEAKV (231 aa)) form an essential for ESRRB transcriptional activity and interaction with NCOA3 region. The 225-residue stretch at 208 to 432 (PLTKIVSNLL…KLFLEMLEAK (225 aa)) folds into the NR LBD domain.

It belongs to the nuclear hormone receptor family. NR3 subfamily. Binds DNA as a monomer. Interacts with NR0B1; represses ESRRB activity at the GATA6 promoter. Interacts with NANOG; reciprocally modulates their transcriptional activities and activates POU5F1 expression. Interacts with NCOA3; mediates the interaction between ESRRB and RNA polymerase II complexes and allows NCOA3 corecruitment to ESRRB, KLF4, NANOG, and SOX2 enhancer regions to trigger ESRRB-dependent gene activation involved in self-renewal and pluripotency. Interacts with KDM1A; co-occupes the core set of ESRRB targets including ELF5 and EOMES. Interacts with the multiprotein complex Integrator, at least composed of INTS1, INTS2, INTS3, INTS4, INTS5, INTS6, INTS7, INTS8, INTS9/RC74, INTS10, INTS11/CPSF3L and INTS12; ESRRB is probably not a core component of the integrator complex and associates to integrator via its interaction with INTS1 and INTS9; attracts the transcriptional machinery. Interacts with JARID2. Interacts with POU5F1; recruits ESRRB near the POU5F1-SOX2 element in the NANOG proximal promoter leading to activation of NANOG expression; the interaction is DNA independent. In terms of processing, acetylated by PCAF/KAT2 (in vitro). Highly expressed in undifferentiated ESCs. Expressed in immature horizontal cells and in rod photoreceptors at intermediate and late stages of differentiation. Expressed in endolymph-producing epithelial cells.

It localises to the nucleus. The protein localises to the cytoplasm. It is found in the chromosome. In terms of biological role, transcription factor that binds a canonical ESRRB recognition (ERRE) sequence 5'TCAAGGTCA-3' localized on promoter and enhancer of targets genes regulating their expression or their transcriptional activity. Plays a role, in a LIF-independent manner, in maintainance of self-renewal and pluripotency of embryonic and trophoblast stem cells through different signaling pathways including FGF signaling pathway and Wnt signaling pathways. Involved in morula development (2-16 cells embryos) by acting as a regulator at the 8-cell stage. Upon FGF signaling pathway activation, interacts with KDM1A by directly binding to enhancer site of ELF5 and EOMES and activating their transcription leading to self-renewal of trophoblast stem cells. Also regulates expression of multiple rod-specific genes and is required for survival of this cell type. Plays a role as transcription factor activator of GATA6, NR0B1, POU5F1 and PERM1. Plays a role as transcription factor repressor of NFE2L2 transcriptional activity and ESR1 transcriptional activity. During mitosis remains bound to a subset of interphase target genes, including pluripotency regulators, through the canonical ESRRB recognition (ERRE) sequence, leading to their transcriptional activation in early G1 phase. Can coassemble on structured DNA elements with other transcription factors like SOX2, POU5F1, KDM1A and NCOA3 to trigger ESRRB-dependent gene activation. This mechanism, in the case of SOX2 corecruitment prevents the embryonic stem cells (ESCs) to epiblast stem cells (EpiSC) transition through positive regulation of NR0B1 that inhibits the EpiSC transcriptional program. Also plays a role inner ear development by controlling expression of ion channels and transporters and in early placentation. The chain is Steroid hormone receptor ERR2 from Mus musculus (Mouse).